The following is a 319-amino-acid chain: tRNA-cytidine(32) 2-sulfurtransferase (319 aa).

Residues 49–54 (SGGKDS) carry the PP-loop motif motif. Positions 124, 127, and 215 each coordinate [4Fe-4S] cluster. Residues 276-319 (DGDTAFDKEEFRDPAPDADDVEDAPKKRTISILDSRGKESGCGA) form a disordered region. Basic and acidic residues-rich tracts occupy residues 280–290 (AFDKEEFRDPA) and 310–319 (SRGKESGCGA).

Belongs to the TtcA family. In terms of assembly, homodimer. The cofactor is Mg(2+). [4Fe-4S] cluster is required as a cofactor.

It localises to the cytoplasm. It carries out the reaction cytidine(32) in tRNA + S-sulfanyl-L-cysteinyl-[cysteine desulfurase] + AH2 + ATP = 2-thiocytidine(32) in tRNA + L-cysteinyl-[cysteine desulfurase] + A + AMP + diphosphate + H(+). The protein operates within tRNA modification. Functionally, catalyzes the ATP-dependent 2-thiolation of cytidine in position 32 of tRNA, to form 2-thiocytidine (s(2)C32). The sulfur atoms are provided by the cysteine/cysteine desulfurase (IscS) system. The sequence is that of tRNA-cytidine(32) 2-sulfurtransferase from Chromobacterium violaceum (strain ATCC 12472 / DSM 30191 / JCM 1249 / CCUG 213 / NBRC 12614 / NCIMB 9131 / NCTC 9757 / MK).